We begin with the raw amino-acid sequence, 348 residues long: MESHKIQLLGLDLSQLERLALDHGESLYRGRQLHQWLYQKGVDNLDDITVLPKAWRNSLIQKGISVGGLVEVNRFIAGDRTIKLLLSTGDGEIIETVGIPSGNRLTICVSSQIGCPMGCQFCATGKDGLKRSLKVNEIVAQVFAVKKAFNRSPSNVVFMGMGEPLLNIEEVLSSICCLNKDLGIGQRRITVSTVGVKNTLPQLAELALQFLGSVQFTLALSLHAPNQKLRESLIPSAQNYPIKLLLEDCRHYLDLTGRRVSFEYILLGHLNDHIEHAEELADLVGGFQSHVNLIAYNPIDGESFQRPSNQRVNIFIKTLQKRGIVVSLRASRGLDKNAACGQLRSMNM.

Residue Glu-95 is the Proton acceptor of the active site. Residues 101-335 enclose the Radical SAM core domain; sequence SGNRLTICVS…VSLRASRGLD (235 aa). Cys-108 and Cys-340 form a disulfide bridge. Residues Cys-115, Cys-119, and Cys-122 each contribute to the [4Fe-4S] cluster site. S-adenosyl-L-methionine contacts are provided by residues 162-163, Ser-192, 221-223, and Asn-297; these read GE and SLH. Cys-340 acts as the S-methylcysteine intermediate in catalysis.

The protein belongs to the radical SAM superfamily. RlmN family. [4Fe-4S] cluster serves as cofactor.

It is found in the cytoplasm. The enzyme catalyses adenosine(2503) in 23S rRNA + 2 reduced [2Fe-2S]-[ferredoxin] + 2 S-adenosyl-L-methionine = 2-methyladenosine(2503) in 23S rRNA + 5'-deoxyadenosine + L-methionine + 2 oxidized [2Fe-2S]-[ferredoxin] + S-adenosyl-L-homocysteine. It carries out the reaction adenosine(37) in tRNA + 2 reduced [2Fe-2S]-[ferredoxin] + 2 S-adenosyl-L-methionine = 2-methyladenosine(37) in tRNA + 5'-deoxyadenosine + L-methionine + 2 oxidized [2Fe-2S]-[ferredoxin] + S-adenosyl-L-homocysteine. Functionally, specifically methylates position 2 of adenine 2503 in 23S rRNA and position 2 of adenine 37 in tRNAs. The sequence is that of Probable dual-specificity RNA methyltransferase RlmN from Prochlorococcus marinus (strain SARG / CCMP1375 / SS120).